A 159-amino-acid polypeptide reads, in one-letter code: MKLNLSLQQAFKSPDLALKRAHIKKAIETTLDHVEVKTDSEIGIACVDHEQSHRLNLEYRGKDKSTNVLSFPSDIPEEVLPLLDARPLGDLVICIPVVLDEAIEQHKTAQAHFMHMLVHGTLHLLGYDHETSDEDAEEMEALEIEILAKLGLENPYQEQ.

Zn(2+) is bound by residues H119, H123, and H129.

This sequence belongs to the endoribonuclease YbeY family. Requires Zn(2+) as cofactor.

The protein resides in the cytoplasm. In terms of biological role, single strand-specific metallo-endoribonuclease involved in late-stage 70S ribosome quality control and in maturation of the 3' terminus of the 16S rRNA. The chain is Endoribonuclease YbeY from Acinetobacter baylyi (strain ATCC 33305 / BD413 / ADP1).